The following is a 193-amino-acid chain: 7-methyl-GTP pyrophosphatase (193 aa).

The active-site Proton acceptor is the Asp70.

This sequence belongs to the Maf family. YceF subfamily. A divalent metal cation is required as a cofactor.

It localises to the cytoplasm. It catalyses the reaction N(7)-methyl-GTP + H2O = N(7)-methyl-GMP + diphosphate + H(+). Its function is as follows. Nucleoside triphosphate pyrophosphatase that hydrolyzes 7-methyl-GTP (m(7)GTP). May have a dual role in cell division arrest and in preventing the incorporation of modified nucleotides into cellular nucleic acids. The chain is 7-methyl-GTP pyrophosphatase from Aliivibrio fischeri (strain ATCC 700601 / ES114) (Vibrio fischeri).